Here is a 222-residue protein sequence, read N- to C-terminus: MKFFIDTADLDEIRSAAELGMLDGVTTNPSLIAKIVKDPSNFTRTDFFDHIAAICDLVDGPVSAEVTSLDTASMIKEGEALAAIHDNVVVKCPLTIDGLKAIRHLSEAGIATNATLVFSPSQAILAAKAGASFVSPFVGRLDDISTDGMALVEDIVDIYDNYGYMAEVIVASVRHPQHVVEAARIGADIATIPFSVISRLAVHPLTESGLKKFMEDASVIKP.

The active-site Schiff-base intermediate with substrate is Lys91.

It belongs to the transaldolase family. Type 3B subfamily.

The protein resides in the cytoplasm. The catalysed reaction is D-sedoheptulose 7-phosphate + D-glyceraldehyde 3-phosphate = D-erythrose 4-phosphate + beta-D-fructose 6-phosphate. It functions in the pathway carbohydrate degradation; pentose phosphate pathway; D-glyceraldehyde 3-phosphate and beta-D-fructose 6-phosphate from D-ribose 5-phosphate and D-xylulose 5-phosphate (non-oxidative stage): step 2/3. Transaldolase is important for the balance of metabolites in the pentose-phosphate pathway. The chain is Probable transaldolase from Chlorobium phaeovibrioides (strain DSM 265 / 1930) (Prosthecochloris vibrioformis (strain DSM 265)).